Reading from the N-terminus, the 86-residue chain is Co-chaperonin GroES (86 aa).

This sequence belongs to the GroES chaperonin family. As to quaternary structure, heptamer of 7 subunits arranged in a ring. Interacts with the chaperonin GroEL.

The protein localises to the cytoplasm. Functionally, together with the chaperonin GroEL, plays an essential role in assisting protein folding. The GroEL-GroES system forms a nano-cage that allows encapsulation of the non-native substrate proteins and provides a physical environment optimized to promote and accelerate protein folding. GroES binds to the apical surface of the GroEL ring, thereby capping the opening of the GroEL channel. The protein is Co-chaperonin GroES of Campylobacter jejuni subsp. doylei (strain ATCC BAA-1458 / RM4099 / 269.97).